Consider the following 365-residue polypeptide: Casein kinase I homolog hhp1 (365 aa).

Residues 11-279 (YRIGRKIGSG…YLRKLFRDLF (269 aa)) form the Protein kinase domain. ATP is bound by residues 17 to 25 (IGSGSFGDI) and Lys40. Catalysis depends on Asp130, which acts as the Proton acceptor. A compositionally biased stretch (low complexity) spans 301–311 (DQQHQQQLQQQ). The segment at 301–365 (DQQHQQQLQQ…TGAQYINRPN (65 aa)) is disordered. Over residues 343–365 (INTTVPVINDPSATGAQYINRPN) the composition is skewed to polar residues.

Belongs to the protein kinase superfamily. CK1 Ser/Thr protein kinase family. Casein kinase I subfamily.

The protein resides in the nucleus. The catalysed reaction is L-seryl-[protein] + ATP = O-phospho-L-seryl-[protein] + ADP + H(+). It carries out the reaction L-threonyl-[protein] + ATP = O-phospho-L-threonyl-[protein] + ADP + H(+). Functionally, involved in DNA repair. Has a probable role in repairing alkylated DNA and may regulate the activity of protein(s) involved in double strand break repair caused by gamma rays. This chain is Casein kinase I homolog hhp1 (hhp1), found in Schizosaccharomyces pombe (strain 972 / ATCC 24843) (Fission yeast).